A 330-amino-acid polypeptide reads, in one-letter code: ADP-L-glycero-D-manno-heptose-6-epimerase (330 aa).

Residues phenylalanine 11–isoleucine 12, aspartate 32–asparagine 33, lysine 39, lysine 54, glutamate 75–serine 79, and asparagine 92 each bind NADP(+). The active-site Proton acceptor is the tyrosine 139. Lysine 143 is a binding site for NADP(+). Residue asparagine 168 participates in substrate binding. NADP(+)-binding residues include valine 169 and lysine 177. The active-site Proton acceptor is lysine 177. Substrate is bound by residues arginine 179, histidine 186, phenylalanine 200–tyrosine 203, arginine 213, and tyrosine 292.

The protein belongs to the NAD(P)-dependent epimerase/dehydratase family. HldD subfamily. In terms of assembly, homopentamer. It depends on NADP(+) as a cofactor.

It carries out the reaction ADP-D-glycero-beta-D-manno-heptose = ADP-L-glycero-beta-D-manno-heptose. It functions in the pathway nucleotide-sugar biosynthesis; ADP-L-glycero-beta-D-manno-heptose biosynthesis; ADP-L-glycero-beta-D-manno-heptose from D-glycero-beta-D-manno-heptose 7-phosphate: step 4/4. Its function is as follows. Catalyzes the interconversion between ADP-D-glycero-beta-D-manno-heptose and ADP-L-glycero-beta-D-manno-heptose via an epimerization at carbon 6 of the heptose. This chain is ADP-L-glycero-D-manno-heptose-6-epimerase, found in Burkholderia ambifaria (strain ATCC BAA-244 / DSM 16087 / CCUG 44356 / LMG 19182 / AMMD) (Burkholderia cepacia (strain AMMD)).